A 194-amino-acid polypeptide reads, in one-letter code: ATP-dependent Clp protease proteolytic subunit (194 aa).

Serine 98 acts as the Nucleophile in catalysis. Residue histidine 123 is part of the active site.

This sequence belongs to the peptidase S14 family. As to quaternary structure, fourteen ClpP subunits assemble into 2 heptameric rings which stack back to back to give a disk-like structure with a central cavity, resembling the structure of eukaryotic proteasomes.

The protein localises to the cytoplasm. The enzyme catalyses Hydrolysis of proteins to small peptides in the presence of ATP and magnesium. alpha-casein is the usual test substrate. In the absence of ATP, only oligopeptides shorter than five residues are hydrolyzed (such as succinyl-Leu-Tyr-|-NHMec, and Leu-Tyr-Leu-|-Tyr-Trp, in which cleavage of the -Tyr-|-Leu- and -Tyr-|-Trp bonds also occurs).. Functionally, cleaves peptides in various proteins in a process that requires ATP hydrolysis. Has a chymotrypsin-like activity. Plays a major role in the degradation of misfolded proteins. This is ATP-dependent Clp protease proteolytic subunit from Alkaliphilus metalliredigens (strain QYMF).